The primary structure comprises 229 residues: RNA pyrophosphohydrolase (229 aa).

A Nudix hydrolase domain is found at 6 to 149 (GFRPNVGIIL…KRGVYEMALT (144 aa)). The short motif at 38–59 (GGIDRGETPEQAMFRELHEEVG) is the Nudix box element. Positions 191-229 (KPGMELPPGASFDPDPQNSVPAPLEALPTLPVPKKPLDA) are disordered. A compositionally biased stretch (pro residues) spans 220 to 229 (LPVPKKPLDA).

The protein belongs to the Nudix hydrolase family. RppH subfamily. Requires a divalent metal cation as cofactor.

In terms of biological role, accelerates the degradation of transcripts by removing pyrophosphate from the 5'-end of triphosphorylated RNA, leading to a more labile monophosphorylated state that can stimulate subsequent ribonuclease cleavage. The polypeptide is RNA pyrophosphohydrolase (Acidovorax ebreus (strain TPSY) (Diaphorobacter sp. (strain TPSY))).